Consider the following 494-residue polypeptide: MHLINAVAAARILSGIGQSNGNNGGEAIPFGSFEWITYAGISCFLVLFAGIMSGLTLGLMSLGLVELEILQRSGTPNEKKQAAAIFPVVQKQHQLLVTLLLCNAMAMEGLPIYLDKLFNEYVAIILSVTFVLAFGEVIPQAICTRYGLAVGANFVWLVRILMTLCYPIAFPIGKILDLVLGHNDALFRRAQLKALVSIHSQEAGKGGELTHDETTIISGALDLTEKTAQEAMTPIESTFSLDVNSKLDWEAMGKILARGHSRVPVYSGNPKNVIGLLLVKSLLTVRPETETLVSAVCIRRIPRVPADMPLYDILNEFQKGSSHMAAVVKVKGKSKVPPSTLLEEHTDESNDSDLTAPLLLKREGNHDNVIVTIDKANGQSFFQNNESGPHGFSHTSEAIEDGEVIGIITLEDVFEELLQEEIVDETDEYVDVHKRIRVAAAAAASSIARAPSSRKLLAQKGTGGQNKQGQTNKVPGQEQDKMLGTITEPIRRNN.

The Extracellular segment spans residues Met1–Cys43. One can recognise a CNNM transmembrane domain in the interval Gly31–Glu213. A helical transmembrane segment spans residues Phe44–Leu64. The Cytoplasmic segment spans residues Val65–His93. The chain crosses the membrane as a helical span at residues Gln94 to Leu114. The Extracellular segment spans residues Asp115–Tyr121. Residues Val122–Ile142 traverse the membrane as a helical segment. The Cytoplasmic portion of the chain corresponds to Cys143–Arg159. Residues Ile160–Leu180 form a helical membrane-spanning segment. The Extracellular segment spans residues Gly181 to Asn494. CBS domains lie at Met232–Leu292, Cys297–Ser352, and Gly364–Glu425. Asn350 and Asn385 each carry an N-linked (GlcNAc...) asparagine glycan. Positions Gln459–Asn494 are disordered.

The protein localises to the membrane. The protein is DUF21 domain-containing protein At4g14240 (CBSDUF1) of Arabidopsis thaliana (Mouse-ear cress).